Here is a 223-residue protein sequence, read N- to C-terminus: Cytotoxic T-lymphocyte protein 4 (223 aa).

A signal peptide spans Met-1–Ser-35. At Lys-36–Asp-161 the chain is on the extracellular side. An Ig-like V-type domain is found at His-39–Tyr-140. A homodimerization region spans residues Val-46–Ser-50. 2 disulfide bridges follow: Cys-58-Cys-129 and Cys-85-Cys-103. Asn-113 carries N-linked (GlcNAc...) asparagine glycosylation. The segment at Met-134–Tyr-139 is important for interaction with CD80 and CD86. Asn-145 carries an N-linked (GlcNAc...) asparagine glycan. A homodimerization region spans residues Tyr-150–Glu-155. The helical transmembrane segment at Phe-162–Thr-182 threads the bilayer. Residues Ala-183 to Asn-223 are Cytoplasmic-facing. A Phosphotyrosine; by TXK and JAK2 modification is found at Tyr-201.

As to quaternary structure, homodimer; disulfide-linked. Binds to CD80/B7-1 and CD86/B7.2. Interacts with ICOSLG. Post-translationally, N-glycosylation is important for dimerization. Phosphorylation at Tyr-201 prevents binding to the AP-2 adapter complex, blocks endocytosis, and leads to retention of CTLA4 on the cell surface.

It localises to the cell membrane. Functionally, inhibitory receptor acting as a major negative regulator of T-cell responses. The affinity of CTLA4 for its natural B7 family ligands, CD80 and CD86, is considerably stronger than the affinity of their cognate stimulatory coreceptor CD28. The sequence is that of Cytotoxic T-lymphocyte protein 4 (CTLA4) from Canis lupus familiaris (Dog).